We begin with the raw amino-acid sequence, 404 residues long: MLRVPDVKASLVEGAARLSTGERVFHVLTSPAVAAMVGVSNPEVPMPLLFEKFGTPDSSTLPLYAARHPELSLLRIMLSPHPYALRSHLCVGEETASLGVYLHSKPVVRGHEFEDTQILPECRLAITSDQSYTNFKIIDLPAGCRRVPIHAANKRVVIDEAANRIKVFDPESPLPRHPITPRAGQTRSILKHNIAQVCERDIVSLNTDNEAASMFYMIGLRRPRLGESPVCDFNTVTIMERANNSITFLPKLKLNRLQHLFLKHVLLRSMGLENIVSCFSSLYGAELAPAKTHEREFFGALLERLKRRVEDAVFCLNTIEDFPFREPIRQPPDCSKVLIEAMEKYFMMCSPKDRQSAAWLGAGVVELICDGNPLSEVLGFLAKYMPIQKECTGNLLKIYALLTV.

Belongs to the lymphocryptovirus BTRF1 family. As to quaternary structure, interacts with ORF34.

It is found in the host nucleus. Its subcellular location is the host cytoplasm. Plays a role in the expression of late genes. This chain is Protein ORF23 (ORF23), found in Homo sapiens (Human).